A 101-amino-acid chain; its full sequence is MKIIRKNKKDKERREQYKQAEQMKNMYKMLRRNELLDQETRNYFNMQVTSSEKNSSISRIKNRCVETGRSRGIISAYRISRLRFREYMKMGLISGVKKRSY.

It belongs to the universal ribosomal protein uS14 family. As to quaternary structure, component of the mitochondrial ribosome small subunit (28S) which comprises a 12S rRNA and about 30 distinct proteins. Interacts with LIAT1.

The protein localises to the mitochondrion. This is Small ribosomal subunit protein uS14m (mrps14) from Dictyostelium citrinum (Slime mold).